We begin with the raw amino-acid sequence, 43 residues long: Myotoxin-2 (43 aa).

Disulfide bonds link C4-C36, C11-C30, and C18-C37.

The protein belongs to the crotamine-myotoxin family. In terms of assembly, monomer. In terms of tissue distribution, expressed by the venom gland.

It localises to the secreted. Functionally, cationic peptide that possesses multiple functions. It acts as a cell-penetrating peptide (CPP), and as a potent voltage-gated potassium channel (Kv) inhibitor. It exhibits antimicrobial activities, hind limb paralysis, and severe muscle necrosis by a non-enzymatic mechanism. This is Myotoxin-2 from Crotalus concolor (Midget faded rattlesnake).